Reading from the N-terminus, the 485-residue chain is T-complex protein 1 subunit theta (485 aa).

The protein belongs to the TCP-1 chaperonin family. In terms of assembly, component of the T-complex protein 1 (TCP1) complex.

The protein localises to the cytoplasm. Its function is as follows. Molecular chaperone; assists the folding of proteins upon ATP hydrolysis. The protein is T-complex protein 1 subunit theta (CCT8) of Encephalitozoon cuniculi (strain GB-M1) (Microsporidian parasite).